The following is a 74-amino-acid chain: DNA-directed RNA polymerase subunit omega (74 aa).

This sequence belongs to the RNA polymerase subunit omega family. In terms of assembly, the RNAP catalytic core consists of 2 alpha, 1 beta, 1 beta' and 1 omega subunit. When a sigma factor is associated with the core the holoenzyme is formed, which can initiate transcription.

The enzyme catalyses RNA(n) + a ribonucleoside 5'-triphosphate = RNA(n+1) + diphosphate. Functionally, promotes RNA polymerase assembly. Latches the N- and C-terminal regions of the beta' subunit thereby facilitating its interaction with the beta and alpha subunits. The polypeptide is DNA-directed RNA polymerase subunit omega (Helicobacter acinonychis (strain Sheeba)).